The primary structure comprises 917 residues: Autophagy-related protein 9 (917 aa).

The Cytoplasmic portion of the chain corresponds to 1–226 (MASNIFSRLV…AGFWCIIVQR (226 aa)). Disordered regions lie at residues 16-37 (RSFY…RAGI) and 119-177 (LLLS…QGRP). A helical transmembrane segment spans residues 227 to 247 (ILELVNAAFVAVFLTFLSQCV). At 248-275 (DYHKLPHSKKMEDIIIPKCTQNMSLVWN) the chain is on the lumenal side. Residue Asn269 is glycosylated (N-linked (GlcNAc...) asparagine). The chain crosses the membrane as a helical span at residues 276–296 (VGLWLFAIYFICRCFGLIIQL). The Cytoplasmic portion of the chain corresponds to 297-442 (RQLKHLRDFY…RQLSQKLKSR (146 aa)). Residues 443–463 (FFFAGLMIFVMSPFIALYLIL) lie within the membrane without spanning it. The Cytoplasmic segment spans residues 464 to 539 (VYFLTYFHEF…ARTVSFITGS (76 aa)). Residues 540–560 (IVAVLGLATIFDSEAFLTFEI) traverse the membrane as a helical segment. At 561-564 (TPDR) the chain is on the lumenal side. Residues 565 to 585 (SVLFYVSILATLWAVARGNIS) form a helical membrane-spanning segment. The Cytoplasmic segment spans residues 586–633 (DDNEVYDPEFAMKSIIEFTHYEPDHWRGRLHSTEVKNEFSELYKPRPQ). Lys621 bears the N6-acetyllysine mark. Residues 634-654 (IFLEEILSILLTPLVLLVSLP) lie within the membrane without spanning it. At 655–917 (NSTDQIVDFF…FQQAHMHLRR (263 aa)) the chain is on the cytoplasmic side. The interval 854–895 (DARFGKLGDEDIDESGGALDESTWQTSPTKTLSRENSGANPQ) is disordered. Over residues 875–895 (STWQTSPTKTLSRENSGANPQ) the composition is skewed to polar residues.

Belongs to the ATG9 family. In terms of assembly, homotrimer; forms a homotrimer with a central pore that forms a path between the two membrane leaflets. Interacts with HAT1. Acetylated by HAT1 at Lys-621, which increases the ability to bind vesicles during nutrient starvation induction. In terms of processing, phosphorylated by ATG1. ATG1 phosphorylation is required for preautophagosome elongation.

The protein resides in the preautophagosomal structure membrane. The protein localises to the cytoplasmic vesicle membrane. It is found in the vacuole membrane. It localises to the golgi apparatus membrane. Its subcellular location is the endoplasmic reticulum membrane. The enzyme catalyses a 1,2-diacyl-sn-glycero-3-phosphocholine(in) = a 1,2-diacyl-sn-glycero-3-phosphocholine(out). It carries out the reaction a 1,2-diacyl-sn-glycero-3-phospho-L-serine(in) = a 1,2-diacyl-sn-glycero-3-phospho-L-serine(out). It catalyses the reaction a 1,2-diacyl-sn-glycero-3-phosphoethanolamine(in) = a 1,2-diacyl-sn-glycero-3-phosphoethanolamine(out). The catalysed reaction is a 1,2-diacyl-sn-glycero-3-phospho-(1D-myo-inositol-3-phosphate)(in) = a 1,2-diacyl-sn-glycero-3-phospho-(1D-myo-inositol-3-phosphate)(out). Functionally, phospholipid scramblase involved in autophagy and cytoplasm to vacuole transport (Cvt) vesicle formation. Cycles between the preautophagosomal structure/phagophore assembly site (PAS) and the cytoplasmic vesicle pool and supplies membrane for the growing autophagosome. Lipid scramblase activity plays a key role in preautophagosomal structure/phagophore assembly by distributing the phospholipids that arrive through ATG2 from the cytoplasmic to the luminal leaflet of the bilayer, thereby driving autophagosomal membrane expansion. Required for mitophagy. Also involved in endoplasmic reticulum-specific autophagic process and is essential for the survival of cells subjected to severe ER stress. Different machineries are required for anterograde trafficking to the PAS during either the Cvt pathway or bulk autophagy and for retrograde trafficking. Plays a role in appressorium formation and pathogenicity. The chain is Autophagy-related protein 9 from Pyricularia oryzae (strain 70-15 / ATCC MYA-4617 / FGSC 8958) (Rice blast fungus).